We begin with the raw amino-acid sequence, 439 residues long: Tol-Pal system protein TolB (439 aa).

A signal peptide spans 1–22; it reads MTKFPRWLAMLVGLLFPLSALT.

This sequence belongs to the TolB family. As to quaternary structure, the Tol-Pal system is composed of five core proteins: the inner membrane proteins TolA, TolQ and TolR, the periplasmic protein TolB and the outer membrane protein Pal. They form a network linking the inner and outer membranes and the peptidoglycan layer.

It localises to the periplasm. Part of the Tol-Pal system, which plays a role in outer membrane invagination during cell division and is important for maintaining outer membrane integrity. In Xylella fastidiosa (strain Temecula1 / ATCC 700964), this protein is Tol-Pal system protein TolB.